Consider the following 623-residue polypeptide: Probable lysophospholipase 5 (623 aa).

Positions Met1–Gly19 are cleaved as a signal peptide. One can recognise a PLA2c domain in the interval Ala67 to Ala607. N-linked (GlcNAc...) asparagine glycans are attached at residues Asn118, Asn153, Asn187, Asn232, Asn256, Asn264, Asn293, Asn331, Asn360, Asn367, Asn400, Asn403, Asn474, Asn508, Asn513, Asn537, Asn564, Asn586, and Asn603.

This sequence belongs to the lysophospholipase family.

The protein resides in the secreted. The catalysed reaction is a 1-acyl-sn-glycero-3-phosphocholine + H2O = sn-glycerol 3-phosphocholine + a fatty acid + H(+). In terms of biological role, catalyzes the release of fatty acids from lysophospholipids. The polypeptide is Probable lysophospholipase 5 (plb5) (Schizosaccharomyces pombe (strain 972 / ATCC 24843) (Fission yeast)).